The following is a 125-amino-acid chain: Small ribosomal subunit protein uS12 (125 aa).

Asp89 carries the 3-methylthioaspartic acid modification.

It belongs to the universal ribosomal protein uS12 family. In terms of assembly, part of the 30S ribosomal subunit. Contacts proteins S8 and S17. May interact with IF1 in the 30S initiation complex.

Functionally, with S4 and S5 plays an important role in translational accuracy. In terms of biological role, interacts with and stabilizes bases of the 16S rRNA that are involved in tRNA selection in the A site and with the mRNA backbone. Located at the interface of the 30S and 50S subunits, it traverses the body of the 30S subunit contacting proteins on the other side and probably holding the rRNA structure together. The combined cluster of proteins S8, S12 and S17 appears to hold together the shoulder and platform of the 30S subunit. This Clostridium novyi (strain NT) protein is Small ribosomal subunit protein uS12.